An 895-amino-acid chain; its full sequence is Protein translocase subunit SecA (895 aa).

ATP contacts are provided by residues glutamine 89, 107–111 (GEGKT), and aspartate 502. Disordered regions lie at residues 560 to 579 (RRID…PGRT) and 848 to 884 (AAPA…CGSG). Zn(2+)-binding residues include cysteine 879, cysteine 881, cysteine 890, and histidine 891.

Belongs to the SecA family. In terms of assembly, monomer and homodimer. Part of the essential Sec protein translocation apparatus which comprises SecA, SecYEG and auxiliary proteins SecDF-YajC and YidC. Zn(2+) serves as cofactor.

The protein resides in the cell inner membrane. It localises to the cytoplasm. The enzyme catalyses ATP + H2O + cellular proteinSide 1 = ADP + phosphate + cellular proteinSide 2.. Part of the Sec protein translocase complex. Interacts with the SecYEG preprotein conducting channel. Has a central role in coupling the hydrolysis of ATP to the transfer of proteins into and across the cell membrane, serving both as a receptor for the preprotein-SecB complex and as an ATP-driven molecular motor driving the stepwise translocation of polypeptide chains across the membrane. The polypeptide is Protein translocase subunit SecA (Ruegeria sp. (strain TM1040) (Silicibacter sp.)).